The sequence spans 765 residues: 5-methyltetrahydropteroyltriglutamate--homocysteine methyltransferase 1 (765 aa).

Positions 18 and 116 each coordinate 5-methyltetrahydropteroyltri-L-glutamate. 437–439 (IGS) serves as a coordination point for L-homocysteine. Residues 437-439 (IGS) and glutamate 490 each bind L-methionine. 5-methyltetrahydropteroyltri-L-glutamate is bound by residues 521 to 522 (RC) and tryptophan 567. Aspartate 605 is a binding site for L-homocysteine. Residue aspartate 605 coordinates L-methionine. Residues histidine 647, cysteine 649, histidine 658, aspartate 662, and glutamate 671 each coordinate Zn(2+). Catalysis depends on histidine 701, which acts as the Proton donor. Cysteine 733 contributes to the Zn(2+) binding site.

The protein belongs to the vitamin-B12 independent methionine synthase family. The cofactor is Zn(2+). In terms of tissue distribution, expressed in leaves, stems, flowers, siliques and seeds.

It localises to the cytoplasm. The protein resides in the cytosol. It catalyses the reaction 5-methyltetrahydropteroyltri-L-glutamate + L-homocysteine = tetrahydropteroyltri-L-glutamate + L-methionine. It functions in the pathway amino-acid biosynthesis; L-methionine biosynthesis via de novo pathway; L-methionine from L-homocysteine (MetE route): step 1/1. Its function is as follows. Catalyzes the transfer of a methyl group from 5-methyltetrahydrofolate to homocysteine resulting in methionine formation. In Arabidopsis thaliana (Mouse-ear cress), this protein is 5-methyltetrahydropteroyltriglutamate--homocysteine methyltransferase 1 (MS1).